The following is a 380-amino-acid chain: MSKRDFYEVLGVSRDASERDIKKAYKRLAMKFHPDRNQGDETAPEKFKEVKVAYEILTDAQKRAAYDQYGHAAFEQGGMGGGGGFGGGQGDFGDIFGDVFGDIFGGGRRGGQQRAQRGSDLRYNMELTLEEAVRGCEKDIEIPTLAACEPCDGTGAKKGTSSTTCSTCHGQGQVQMRQGFFAVQQACPTCHGKGKIIKDPCNSCHGDGRVQKTKTLNVKIPSGVDTGDRIRLSGEGEAGEHGAPAGDLYVQVHVKEHNIFDRDGNNLYCEVPVSFTMAALGGEVEVPTLDGRVSLKVPLETQTGRMFRMRGKGVKGVRTHSAGDLIVKLIVETPVKLTKRQRELLKEFQESFDGKDAKKHNPKSEGFLSGVKNFFDDLTK.

Positions 5-70 (DFYEVLGVSR…QKRAAYDQYG (66 aa)) constitute a J domain. The CR-type zinc-finger motif lies at 135–213 (GCEKDIEIPT…CHGDGRVQKT (79 aa)). Zn(2+) is bound by residues Cys148, Cys151, Cys165, Cys168, Cys187, Cys190, Cys201, and Cys204. CXXCXGXG motif repeat units lie at residues 148 to 155 (CEPCDGTG), 165 to 172 (CSTCHGQG), 187 to 194 (CPTCHGKG), and 201 to 208 (CNSCHGDG).

It belongs to the DnaJ family. In terms of assembly, homodimer. The cofactor is Zn(2+).

Its subcellular location is the cytoplasm. Participates actively in the response to hyperosmotic and heat shock by preventing the aggregation of stress-denatured proteins and by disaggregating proteins, also in an autonomous, DnaK-independent fashion. Unfolded proteins bind initially to DnaJ; upon interaction with the DnaJ-bound protein, DnaK hydrolyzes its bound ATP, resulting in the formation of a stable complex. GrpE releases ADP from DnaK; ATP binding to DnaK triggers the release of the substrate protein, thus completing the reaction cycle. Several rounds of ATP-dependent interactions between DnaJ, DnaK and GrpE are required for fully efficient folding. Also involved, together with DnaK and GrpE, in the DNA replication of plasmids through activation of initiation proteins. This chain is Chaperone protein DnaJ, found in Aliivibrio salmonicida (strain LFI1238) (Vibrio salmonicida (strain LFI1238)).